A 91-amino-acid polypeptide reads, in one-letter code: MAHKKAGGSSRNGRDSESKRLGVKRYGGQFVLAGNIIVRQRGTEYHPGENVGIGKDHTLFALKDGTVKFLVKGAAKRRTVVIEAAQEAAAA.

The tract at residues 1 to 21 is disordered; that stretch reads MAHKKAGGSSRNGRDSESKRL.

It belongs to the bacterial ribosomal protein bL27 family.

The sequence is that of Large ribosomal subunit protein bL27 from Azoarcus sp. (strain BH72).